A 302-amino-acid chain; its full sequence is MATSSTLPAVVPALGGDQSLNHYLADIRKFPILKPEEEYMLAKRFQEHQDPKAASRLVTSHLRLVAKIAMGYRGYGLPVSELISEGNIGLMQGVKKFDPERGFRLATYAIWWIKASIQEYILRSWSLVKMGTTAAQKKLFFNLRRLKSNMNAFEDGDLKPDEVDSIATNLGVSNEEVVNMNRRMAMGGDSSLNITMREDGEGQMQDWLVDQEPLQDQQIEEEEESLVRHKLLIEAMDKLNDREKHILTERRLSDNPKTLEELSQVYGVSRERVRQIEVRAFDKLQKAIMELAGDRKLLPAMA.

A sigma-70 factor domain-2 region spans residues 57–126 (LVTSHLRLVA…IQEYILRSWS (70 aa)). The short motif at 81-84 (ELIS) is the Interaction with polymerase core subunit RpoC element. The segment at 235–286 (AMDKLNDREKHILTERRLSDNPKTLEELSQVYGVSRERVRQIEVRAFDKLQK) is sigma-70 factor domain-4. Positions 259–278 (LEELSQVYGVSRERVRQIEV) form a DNA-binding region, H-T-H motif.

This sequence belongs to the sigma-70 factor family. RpoH subfamily. In terms of assembly, interacts with the RNA polymerase core enzyme.

The protein localises to the cytoplasm. In terms of biological role, sigma factors are initiation factors that promote the attachment of RNA polymerase to specific initiation sites and are then released. This sigma factor is involved in regulation of expression of heat shock genes. The chain is RNA polymerase sigma factor RpoH from Zymomonas mobilis subsp. mobilis (strain ATCC 31821 / ZM4 / CP4).